Reading from the N-terminus, the 208-residue chain is Small ribosomal subunit protein uS4 (208 aa).

Residues 98-159 enclose the S4 RNA-binding domain; the sequence is RRLDNVAYRL…KSRKVAAISE (62 aa).

This sequence belongs to the universal ribosomal protein uS4 family. As to quaternary structure, part of the 30S ribosomal subunit. Contacts protein S5. The interaction surface between S4 and S5 is involved in control of translational fidelity.

In terms of biological role, one of the primary rRNA binding proteins, it binds directly to 16S rRNA where it nucleates assembly of the body of the 30S subunit. Its function is as follows. With S5 and S12 plays an important role in translational accuracy. The protein is Small ribosomal subunit protein uS4 of Citrifermentans bemidjiense (strain ATCC BAA-1014 / DSM 16622 / JCM 12645 / Bem) (Geobacter bemidjiensis).